Reading from the N-terminus, the 128-residue chain is Large ribosomal subunit protein bL17 (128 aa).

Belongs to the bacterial ribosomal protein bL17 family. Part of the 50S ribosomal subunit. Contacts protein L32.

In Pseudomonas syringae pv. tomato (strain ATCC BAA-871 / DC3000), this protein is Large ribosomal subunit protein bL17.